The sequence spans 122 residues: Large ribosomal subunit protein uL14 (122 aa).

Belongs to the universal ribosomal protein uL14 family. Part of the 50S ribosomal subunit. Forms a cluster with proteins L3 and L19. In the 70S ribosome, L14 and L19 interact and together make contacts with the 16S rRNA in bridges B5 and B8.

Binds to 23S rRNA. Forms part of two intersubunit bridges in the 70S ribosome. This chain is Large ribosomal subunit protein uL14, found in Chlorobium phaeobacteroides (strain BS1).